Reading from the N-terminus, the 308-residue chain is Microtubule integrity protein mal3 (308 aa).

The Calponin-homology (CH) domain maps to 2-103; sequence SESRQELLAW…FVQWAKRFWD (102 aa). Residues 117-162 form a disordered region; sequence RGNRGPANTRVMNSSAGATGPSRRRQVSSGSSTPSMTKSSANNNNV. Residues 144–162 show a composition bias toward low complexity; sequence SSGSSTPSMTKSSANNNNV. The EB1 C-terminal domain maps to 173 to 247; it reads RAKQAQQQIT…LYSTEDGFEL (75 aa).

Belongs to the MAPRE family. As to quaternary structure, interacts with tea2.

The protein localises to the cytoplasm. It is found in the cytoskeleton. Functionally, may play a role in regulating the integrity of microtubules possibly by influencing their stability. Involved in an anchoring mechanism to maintain tea2 and tip1 at growing microtubule ends. Strongly stimulates the ATPase activity of tea2. This is Microtubule integrity protein mal3 (mal3) from Schizosaccharomyces pombe (strain 972 / ATCC 24843) (Fission yeast).